Reading from the N-terminus, the 361-residue chain is tRNA/tmRNA (uracil-C(5))-methyltransferase (361 aa).

The S-adenosyl-L-methionine site is built by Q183, Y211, N216, E232, and D294. Residue C319 is the Nucleophile of the active site. E353 (proton acceptor) is an active-site residue.

This sequence belongs to the class I-like SAM-binding methyltransferase superfamily. RNA M5U methyltransferase family. TrmA subfamily.

The enzyme catalyses uridine(54) in tRNA + S-adenosyl-L-methionine = 5-methyluridine(54) in tRNA + S-adenosyl-L-homocysteine + H(+). The catalysed reaction is uridine(341) in tmRNA + S-adenosyl-L-methionine = 5-methyluridine(341) in tmRNA + S-adenosyl-L-homocysteine + H(+). Its function is as follows. Dual-specificity methyltransferase that catalyzes the formation of 5-methyluridine at position 54 (m5U54) in all tRNAs, and that of position 341 (m5U341) in tmRNA (transfer-mRNA). The chain is tRNA/tmRNA (uracil-C(5))-methyltransferase from Acinetobacter baumannii (strain AYE).